Consider the following 576-residue polypeptide: Arginine--tRNA ligase (576 aa).

A 'HIGH' region motif is present at residues 122-132 (PNVAKEMHVGH).

It belongs to the class-I aminoacyl-tRNA synthetase family. Monomer.

It localises to the cytoplasm. The catalysed reaction is tRNA(Arg) + L-arginine + ATP = L-arginyl-tRNA(Arg) + AMP + diphosphate. In Pectobacterium atrosepticum (strain SCRI 1043 / ATCC BAA-672) (Erwinia carotovora subsp. atroseptica), this protein is Arginine--tRNA ligase.